Consider the following 226-residue polypeptide: Cytidylate kinase (226 aa).

12-20 provides a ligand contact to ATP; the sequence is GPSGAGKGT.

Belongs to the cytidylate kinase family. Type 1 subfamily.

The protein resides in the cytoplasm. It catalyses the reaction CMP + ATP = CDP + ADP. It carries out the reaction dCMP + ATP = dCDP + ADP. This is Cytidylate kinase from Vibrio vulnificus (strain CMCP6).